The primary structure comprises 132 residues: Fatty acid-binding protein, brain (132 aa).

At Val-2 the chain carries N-acetylvaline. 127-129 contacts a fatty acid; that stretch reads RCY.

The protein belongs to the calycin superfamily. Fatty-acid binding protein (FABP) family. In terms of tissue distribution, expressed in brain and other neural tissues.

The protein localises to the cytoplasm. In terms of biological role, B-FABP could be involved in the transport of a so far unknown hydrophobic ligand with potential morphogenic activity during CNS development. It is required for the establishment of the radial glial fiber system in developing brain, a system that is necessary for the migration of immature neurons to establish cortical layers. The sequence is that of Fatty acid-binding protein, brain (Fabp7) from Mus musculus (Mouse).